A 126-amino-acid chain; its full sequence is Small ribosomal subunit protein uS13 (126 aa).

A disordered region spans residues 92 to 126; it reads HRMGLPVRGQRTRTNARTRRGRRQTVAGKKKAPGK. Residues 101-126 are compositionally biased toward basic residues; sequence QRTRTNARTRRGRRQTVAGKKKAPGK.

This sequence belongs to the universal ribosomal protein uS13 family. In terms of assembly, part of the 30S ribosomal subunit. Forms a loose heterodimer with protein S19. Forms two bridges to the 50S subunit in the 70S ribosome.

Its function is as follows. Located at the top of the head of the 30S subunit, it contacts several helices of the 16S rRNA. In the 70S ribosome it contacts the 23S rRNA (bridge B1a) and protein L5 of the 50S subunit (bridge B1b), connecting the 2 subunits; these bridges are implicated in subunit movement. Contacts the tRNAs in the A and P-sites. The polypeptide is Small ribosomal subunit protein uS13 (Nostoc punctiforme (strain ATCC 29133 / PCC 73102)).